We begin with the raw amino-acid sequence, 183 residues long: ADP-ribosylation factor-like protein 1 (183 aa).

G2 carries the N-myristoyl glycine lipid modification. GTP contacts are provided by residues 25 to 32 (GLDGAGKT), 68 to 72 (DLGGQ), and 127 to 130 (NKQD).

This sequence belongs to the small GTPase superfamily. Arf family. As to quaternary structure, homodimer. Interacts with IMH1 (via GRIP domain); the interaction is dependent on GTP. Interacts with MON2.

It localises to the golgi apparatus. In terms of biological role, recruits golgins such as IMH1 to the Golgi. Can bind and hydrolyze GTP. May be involved in trafficking events within the endosomal system. The polypeptide is ADP-ribosylation factor-like protein 1 (ARL1) (Saccharomyces cerevisiae (strain ATCC 204508 / S288c) (Baker's yeast)).